Reading from the N-terminus, the 357-residue chain is Dual-specificity RNA methyltransferase RlmN (357 aa).

The active-site Proton acceptor is Glu89. The 232-residue stretch at 109–340 folds into the Radical SAM core domain; that stretch reads EGEKYTVCVS…CTIRESKALD (232 aa). A disulfide bridge connects residues Cys116 and Cys345. [4Fe-4S] cluster contacts are provided by Cys123, Cys127, and Cys130. Residues 173–174, Ser203, 226–228, and Asn302 each bind S-adenosyl-L-methionine; these read GE and SLH. Residue Cys345 is the S-methylcysteine intermediate of the active site.

The protein belongs to the radical SAM superfamily. RlmN family. Requires [4Fe-4S] cluster as cofactor.

It localises to the cytoplasm. The enzyme catalyses adenosine(2503) in 23S rRNA + 2 reduced [2Fe-2S]-[ferredoxin] + 2 S-adenosyl-L-methionine = 2-methyladenosine(2503) in 23S rRNA + 5'-deoxyadenosine + L-methionine + 2 oxidized [2Fe-2S]-[ferredoxin] + S-adenosyl-L-homocysteine. It catalyses the reaction adenosine(37) in tRNA + 2 reduced [2Fe-2S]-[ferredoxin] + 2 S-adenosyl-L-methionine = 2-methyladenosine(37) in tRNA + 5'-deoxyadenosine + L-methionine + 2 oxidized [2Fe-2S]-[ferredoxin] + S-adenosyl-L-homocysteine. Specifically methylates position 2 of adenine 2503 in 23S rRNA and position 2 of adenine 37 in tRNAs. m2A2503 modification seems to play a crucial role in the proofreading step occurring at the peptidyl transferase center and thus would serve to optimize ribosomal fidelity. This Helicobacter pylori (strain J99 / ATCC 700824) (Campylobacter pylori J99) protein is Dual-specificity RNA methyltransferase RlmN.